The sequence spans 167 residues: Peptidyl-prolyl cis-trans isomerase-like 3 (167 aa).

One can recognise a PPIase cyclophilin-type domain in the interval 1–153 (MSVTLHTNLG…QEIKLLNVTV (153 aa)).

This sequence belongs to the cyclophilin-type PPIase family. PPIL3 subfamily.

The enzyme catalyses [protein]-peptidylproline (omega=180) = [protein]-peptidylproline (omega=0). In terms of biological role, PPIases accelerate the folding of proteins. It catalyzes the cis-trans isomerization of proline imidic peptide bonds in oligopeptides. This Cryptococcus neoformans var. neoformans serotype D (strain B-3501A) (Filobasidiella neoformans) protein is Peptidyl-prolyl cis-trans isomerase-like 3 (CYP10).